The sequence spans 485 residues: ATP synthase subunit beta, cyanelle (485 aa).

162–169 is a binding site for ATP; sequence GGAGVGKT.

Belongs to the ATPase alpha/beta chains family. As to quaternary structure, F-type ATPases have 2 components, CF(1) - the catalytic core - and CF(0) - the membrane proton channel. CF(1) has five subunits: alpha(3), beta(3), gamma(1), delta(1), epsilon(1). CF(0) has four main subunits: a(1), b(1), b'(1) and c(9-12).

It localises to the plastid. The protein localises to the cyanelle thylakoid membrane. The catalysed reaction is ATP + H2O + 4 H(+)(in) = ADP + phosphate + 5 H(+)(out). Functionally, produces ATP from ADP in the presence of a proton gradient across the membrane. The catalytic sites are hosted primarily by the beta subunits. This is ATP synthase subunit beta, cyanelle from Cyanophora paradoxa.